We begin with the raw amino-acid sequence, 187 residues long: MTGSVDRPDQNRGERLMKSPGLDLVRRTLDEARAAARARGQDAGRGRVASVASGRVAGRRRSWSGPGPDIRDPQPLGKAARELAKKRGWSVRVAEGMVLGQWSAVVGHQIAEHARPTALNDGVLSVIAESTAWATQLRIMQAQLLAKIAAAVGNDVVRSLKITGPAAPSWRKGPRHIAGRGPRDTYG.

Composition is skewed to basic and acidic residues over residues 1 to 17 (MTGS…ERLM) and 35 to 45 (AARARGQDAGR). 3 disordered regions span residues 1 to 23 (MTGS…PGLD), 35 to 75 (AARA…DPQP), and 168 to 187 (PSWR…DTYG).

It belongs to the UPF0232 family.

This is UPF0232 protein Mb0004 from Mycobacterium bovis (strain ATCC BAA-935 / AF2122/97).